A 720-amino-acid polypeptide reads, in one-letter code: Probable ATP-dependent RNA helicase DHX35 (720 aa).

A Helicase ATP-binding domain is found at 64–229 (LYLIENYQTV…FNQNETSDPA (166 aa)). 77-84 (GETGCGKS) lines the ATP pocket. Positions 176–179 (DEAH) match the DEAH box motif. In terms of domain architecture, Helicase C-terminal spans 261-438 (TVETVVKIHQ…PVILQLKALG (178 aa)).

It belongs to the DEAD box helicase family. DEAH subfamily. In terms of assembly, identified in the spliceosome C complex.

The enzyme catalyses ATP + H2O = ADP + phosphate + H(+). Its function is as follows. May be involved in pre-mRNA splicing. The protein is Probable ATP-dependent RNA helicase DHX35 (DHX35) of Pongo abelii (Sumatran orangutan).